The primary structure comprises 405 residues: Tryptophan synthase beta chain (405 aa).

Lysine 98 is subject to N6-(pyridoxal phosphate)lysine.

The protein belongs to the TrpB family. In terms of assembly, tetramer of two alpha and two beta chains. Pyridoxal 5'-phosphate is required as a cofactor.

The enzyme catalyses (1S,2R)-1-C-(indol-3-yl)glycerol 3-phosphate + L-serine = D-glyceraldehyde 3-phosphate + L-tryptophan + H2O. The protein operates within amino-acid biosynthesis; L-tryptophan biosynthesis; L-tryptophan from chorismate: step 5/5. Its function is as follows. The beta subunit is responsible for the synthesis of L-tryptophan from indole and L-serine. The chain is Tryptophan synthase beta chain from Parvibaculum lavamentivorans (strain DS-1 / DSM 13023 / NCIMB 13966).